The chain runs to 646 residues: Chaperone protein DnaK (646 aa).

Thr198 is modified (phosphothreonine; by autocatalysis). Residues 603-646 form a disordered region; it reads EQAQQAGGAEGFDPNAFQGGDAGQQKADDGVVDAEFTEVKDDKK. Residues 618–627 are compositionally biased toward low complexity; the sequence is AFQGGDAGQQ.

The protein belongs to the heat shock protein 70 family.

Its function is as follows. Acts as a chaperone. The chain is Chaperone protein DnaK from Acinetobacter baumannii (strain ACICU).